Here is a 297-residue protein sequence, read N- to C-terminus: MNYPSVSEQKHRVFIIYSAYLRVQFRESARLAVSVRNKNYNLVRADLHNILPQKNTTVFKDGTLAPLLIRLAWHSCATYDKYTRTGGSNGATMRYHLEASDEGNVGLEVARLSLEPIKRKHPWITYADLWILAGVVSIEACKGPSIKWRDGRVDYEDDLLVPPNGRLPLGGGDASHVRTIFSRMGFNDQETVALIGAHSLGRLHHHRSGFDGPWTSNPAKCDNEFYKLLLGNVWTLVDSPTGRKQYVNSTGQVMMPSDMSLIEDANFRFWVDQYAVSEELWRDHFALAFEKLTELGR.

His74 acts as the Proton acceptor in catalysis. Heme b is bound at residue His198. The active-site Tryptophan radical intermediate is the Trp214.

It belongs to the peroxidase family. Cytochrome c peroxidase subfamily. Heme b is required as a cofactor.

In terms of biological role, destroys radicals which are normally produced within the cells and which are toxic to biological systems. The sequence is that of Putative heme-binding peroxidase from Yarrowia lipolytica (strain CLIB 122 / E 150) (Yeast).